A 610-amino-acid chain; its full sequence is Fimbrin (610 aa).

2 consecutive EF-hand domains span residues 7-42 and 43-78; these read SEIS…CGEK and VTGV…ARQH. Residues Asp-20, Asn-22, Asp-24, Gln-26, Glu-31, Asp-56, Asp-58, Asn-60, Ser-62, and Glu-67 each coordinate Ca(2+). Actin-binding regions lie at residues 102–365 and 366–608; these read YSGS…NTHP and ALEP…QVEM. 4 consecutive Calponin-homology (CH) domains span residues 116–232, 260–365, 379–488, and 501–608; these read DEEK…KIGL, LPVE…NTHP, TREE…RGHV, and PIAD…QVEM.

In terms of biological role, binds to actin. In Dictyostelium discoideum (Social amoeba), this protein is Fimbrin (fimA).